We begin with the raw amino-acid sequence, 26 residues long: Delta-conotoxin Am2766 (26 aa).

Intrachain disulfides connect Cys1–Cys16, Cys8–Cys20, and Cys15–Cys24. The residue at position 26 (Glu26) is a Glutamic acid 1-amide.

In terms of tissue distribution, expressed by the venom duct.

The protein localises to the secreted. Delta-conotoxins bind to site 6 of voltage-gated sodium channels (Nav) and inhibit the inactivation process. The sequence is that of Delta-conotoxin Am2766 from Conus amadis (Amadis cone).